Reading from the N-terminus, the 473-residue chain is Sensor histidine kinase YclK (473 aa).

At 1–9 (MMKIKYLYQ) the chain is on the cytoplasmic side. Residues 10–30 (LLLSHISILILAFVIIISLFS) traverse the membrane as a helical segment. The Extracellular portion of the chain corresponds to 31–164 (HFVKEFAYQN…GVEQMVNQVN (134 aa)). A helical transmembrane segment spans residues 165-185 (LYMFYAVISTLVITILVSWLL). The Cytoplasmic segment spans residues 186 to 473 (SKFHVKRIQK…IRLPLTAKQQ (288 aa)). The region spanning 187-239 (KFHVKRIQKLREATDKVASGDYDIHLENSYGDEIGVLASDFNIMAKKLKQSRD) is the HAMP domain. Residues 254–470 (DVSHELKTPL…KFIIRLPLTA (217 aa)) enclose the Histidine kinase domain. His257 is modified (phosphohistidine; by autocatalysis).

The protein resides in the cell membrane. The catalysed reaction is ATP + protein L-histidine = ADP + protein N-phospho-L-histidine.. In terms of biological role, could be member of the two-component regulatory system YclK/YclJ. Potentially phosphorylates YclJ. The protein is Sensor histidine kinase YclK (yclK) of Bacillus subtilis (strain 168).